We begin with the raw amino-acid sequence, 288 residues long: Polyamine aminopropyltransferase (288 aa).

A PABS domain is found at glutamate 9–aspartate 238. Residue glutamine 33 participates in S-methyl-5'-thioadenosine binding. Residues histidine 64 and aspartate 88 each contribute to the spermidine site. S-methyl-5'-thioadenosine-binding positions include glutamate 108 and aspartate 140–glycine 141. Catalysis depends on aspartate 158, which acts as the Proton acceptor. Residue aspartate 158–aspartate 161 coordinates spermidine. Position 165 (proline 165) interacts with S-methyl-5'-thioadenosine.

The protein belongs to the spermidine/spermine synthase family. In terms of assembly, homodimer or homotetramer.

It localises to the cytoplasm. The enzyme catalyses S-adenosyl 3-(methylsulfanyl)propylamine + putrescine = S-methyl-5'-thioadenosine + spermidine + H(+). It participates in amine and polyamine biosynthesis; spermidine biosynthesis; spermidine from putrescine: step 1/1. Its function is as follows. Catalyzes the irreversible transfer of a propylamine group from the amino donor S-adenosylmethioninamine (decarboxy-AdoMet) to putrescine (1,4-diaminobutane) to yield spermidine. This chain is Polyamine aminopropyltransferase, found in Escherichia fergusonii (strain ATCC 35469 / DSM 13698 / CCUG 18766 / IAM 14443 / JCM 21226 / LMG 7866 / NBRC 102419 / NCTC 12128 / CDC 0568-73).